The following is a 360-amino-acid chain: DNA replication and repair protein RecF (360 aa).

Residue 30–37 participates in ATP binding; the sequence is GENGAGKT.

This sequence belongs to the RecF family.

The protein resides in the cytoplasm. Functionally, the RecF protein is involved in DNA metabolism; it is required for DNA replication and normal SOS inducibility. RecF binds preferentially to single-stranded, linear DNA. It also seems to bind ATP. In Deinococcus deserti (strain DSM 17065 / CIP 109153 / LMG 22923 / VCD115), this protein is DNA replication and repair protein RecF.